Here is a 197-residue protein sequence, read N- to C-terminus: Peptide deformylase (197 aa).

Fe cation is bound by residues Cys-106 and His-148. Residue Glu-149 is part of the active site. His-152 contributes to the Fe cation binding site.

It belongs to the polypeptide deformylase family. Fe(2+) is required as a cofactor.

The enzyme catalyses N-terminal N-formyl-L-methionyl-[peptide] + H2O = N-terminal L-methionyl-[peptide] + formate. Removes the formyl group from the N-terminal Met of newly synthesized proteins. Requires at least a dipeptide for an efficient rate of reaction. N-terminal L-methionine is a prerequisite for activity but the enzyme has broad specificity at other positions. The protein is Peptide deformylase of Mycobacterium ulcerans (strain Agy99).